The chain runs to 205 residues: N-(5'-phosphoribosyl)anthranilate isomerase (205 aa).

This sequence belongs to the TrpF family.

The enzyme catalyses N-(5-phospho-beta-D-ribosyl)anthranilate = 1-(2-carboxyphenylamino)-1-deoxy-D-ribulose 5-phosphate. It participates in amino-acid biosynthesis; L-tryptophan biosynthesis; L-tryptophan from chorismate: step 3/5. This chain is N-(5'-phosphoribosyl)anthranilate isomerase, found in Thiobacillus denitrificans (strain ATCC 25259 / T1).